Reading from the N-terminus, the 603-residue chain is Polypeptide N-acetylgalactosaminyltransferase 10 (603 aa).

Residues 1-11 (MRRKEKRLLQA) are Cytoplasmic-facing. A helical; Signal-anchor for type II membrane protein transmembrane segment spans residues 12 to 31 (VALVLAALVLLPNVGLWALY). The Lumenal segment spans residues 32-603 (RERQPDGTPG…STVLEKFNRN (572 aa)). The disordered stretch occupies residues 38-59 (GTPGGSGAAVAPAAGQGSHSRQ). Over residues 45 to 55 (AAVAPAAGQGS) the composition is skewed to low complexity. N-linked (GlcNAc...) asparagine glycans are attached at residues asparagine 124 and asparagine 146. Disulfide bonds link cysteine 135-cysteine 365, cysteine 356-cysteine 432, cysteine 471-cysteine 488, cysteine 523-cysteine 538, and cysteine 563-cysteine 578. A catalytic subdomain A region spans residues 144-253 (LPNTSIIIPF…VNWLPPLLDR (110 aa)). 4 residues coordinate substrate: histidine 154, glutamate 156, aspartate 185, and arginine 214. Residue aspartate 237 coordinates Mn(2+). Serine 238 provides a ligand contact to substrate. Histidine 239 provides a ligand contact to Mn(2+). The catalytic subdomain B stretch occupies residues 311-373 (PFESPVMAGG…PCSRVGHIYR (63 aa)). Tryptophan 342 is a binding site for substrate. Histidine 370 lines the Mn(2+) pocket. Arginine 373 and tyrosine 378 together coordinate substrate. The segment at 373-384 (RKYVPYKVPAGV) is flexible loop. The 133-residue stretch at 458-590 (AAWGEIRNVG…SSLTQQWLFE (133 aa)) folds into the Ricin B-type lectin domain. Asparagine 593 carries N-linked (GlcNAc...) asparagine glycosylation.

The protein belongs to the glycosyltransferase 2 family. GalNAc-T subfamily. It depends on Mn(2+) as a cofactor. Widely expressed. Expressed at high level in small intestine, and at intermediate levels in stomach, pancreas, ovary, thyroid gland and spleen. Weakly expressed in other tissues.

Its subcellular location is the golgi apparatus membrane. It catalyses the reaction L-seryl-[protein] + UDP-N-acetyl-alpha-D-galactosamine = a 3-O-[N-acetyl-alpha-D-galactosaminyl]-L-seryl-[protein] + UDP + H(+). It carries out the reaction L-threonyl-[protein] + UDP-N-acetyl-alpha-D-galactosamine = a 3-O-[N-acetyl-alpha-D-galactosaminyl]-L-threonyl-[protein] + UDP + H(+). It functions in the pathway protein modification; protein glycosylation. Its function is as follows. Catalyzes the initial reaction in O-linked oligosaccharide biosynthesis, the transfer of an N-acetyl-D-galactosamine residue to a serine or threonine residue on the protein receptor. Has activity toward Muc5Ac and EA2 peptide substrates. The sequence is that of Polypeptide N-acetylgalactosaminyltransferase 10 (GALNT10) from Homo sapiens (Human).